The sequence spans 358 residues: Ribosomal RNA large subunit methyltransferase M (358 aa).

S-adenosyl-L-methionine contacts are provided by residues serine 183, 216 to 219 (APGG), aspartate 235, aspartate 255, and aspartate 271. Residue lysine 300 is the Proton acceptor of the active site.

The protein belongs to the class I-like SAM-binding methyltransferase superfamily. RNA methyltransferase RlmE family. RlmM subfamily. In terms of assembly, monomer.

The protein resides in the cytoplasm. It catalyses the reaction cytidine(2498) in 23S rRNA + S-adenosyl-L-methionine = 2'-O-methylcytidine(2498) in 23S rRNA + S-adenosyl-L-homocysteine + H(+). Catalyzes the 2'-O-methylation at nucleotide C2498 in 23S rRNA. The polypeptide is Ribosomal RNA large subunit methyltransferase M (Pseudomonas fluorescens (strain SBW25)).